A 1117-amino-acid chain; its full sequence is Telomerase reverse transcriptase (1117 aa).

Residues 1–191 (MQKINNINNN…VKQKKWYKNN (191 aa)) form a TEN region. The segment at 217–519 (NQYIYPEIQR…ENLEKVEEKL (303 aa)) is RBD. The region spanning 517–881 (EKLIPEDSFQ…NECQWIGKSI (365 aa)) is the Reverse transcriptase domain. The segment at 520–887 (IPEDSFQKYP…GKSIDMNTLE (368 aa)) is RT. Asp-618 contributes to the Mg(2+) binding site. Positions 638–742 (SDLIQDTYFI…NQDKPRCITK (105 aa)) are TRAP. Mg(2+)-binding residues include Asp-815 and Asp-816. Positions 888 to 1117 (IKSIQKQTQQ…SAKSNQQNTN (230 aa)) are CTE.

This sequence belongs to the reverse transcriptase family. Telomerase subfamily. As to quaternary structure, component of the telomerase holoenzyme complex, composed of the catalytic core (the catalytic subunit TERT, the telomerase RNA template component TER and TAP65/p65), which is associated with two heterotrimeric subcomplexes: (i) the replication protein A (RPA)-related subcomplex, composed of TEB1, RPA2/TEB2 and RPA3/TEB3 and (ii) the CST-like subcomplex, composed of TAP75/p75, TAP45/p45 and TAP19/p19. TEB1 and the CST-like subcomplex are tethered to the catalytic core by TAP50/p50.

It is found in the nucleus. It localises to the chromosome. The protein localises to the telomere. The catalysed reaction is DNA(n) + a 2'-deoxyribonucleoside 5'-triphosphate = DNA(n+1) + diphosphate. Its function is as follows. Catalytic component of telomerase, an essential ribonucleoprotein enzyme that copies new telomeric repeats onto chromosome ends by repetitively synthesizing the short telomere-repeat sequence 5'-TTGGGG-3' using an RNA template component TER. TERT is a reverse transcriptase that adds simple sequence repeats to chromosome ends by copying a template sequence within the RNA component of the enzyme. This chain is Telomerase reverse transcriptase, found in Tetrahymena thermophila (strain SB210).